The following is a 71-amino-acid chain: Putative antitoxin VapB15 (71 aa).

This sequence belongs to the UPF0330 family.

In terms of biological role, possibly the antitoxin component of a type II toxin-antitoxin (TA) system. Its cognate toxin is VapC15 (Potential). The chain is Putative antitoxin VapB15 (vapB15) from Archaeoglobus fulgidus (strain ATCC 49558 / DSM 4304 / JCM 9628 / NBRC 100126 / VC-16).